We begin with the raw amino-acid sequence, 704 residues long: MVHVNPIVKSFEYGQHTVTLETGVIARQADAAVLASMGDTTVLVTVVGKKFEEPGRDFFPLTVNYQEKTYAAGKIPGGFFKREGRPSEGETLTARLIDRPIRPLFPNGFKNEVQVIITVVSVDPEISPEVISMIGTSAALSISGIPFNGPLGSARVGYVNGEYILNPTVSQLVDSQLELSVAGTDSAVLMVESEASALPEEVMLGAVVYGHDQQQVVIQAIKELQAEVNKPVWDWAAPVQDETLVAKIKDLAEAGLTEAYQIEVKQDRYAQVGVVKNAAKEALLAENPDANTREIDGLLGSLEKKVVRGRIIAGNPRIDGREPDMVRALNVMAGVLPRTHGSSLFTRGETQALVTCTLGTERDAQKIDSIMGEYTNRFMLHYNFPPYSVGETGMVGSPKRREIGHGKLAWRGINAVMPTAEEFPYSVRIVSEITESNGSSSMASVCGTSLALMDAGVPIKTSVAGIAMGLVKEGDDFVVLSDILGDEDHLGDMDFKVAGTRDGITALQMDIKIEGITKEIMQIALQQAYGARVHILNVMDQAIGSHRGDISEHAPRITTIKINPEKIRDVIGKGGATIRALTEETGTTIELDDDGTVKIASSNGEATKEAIRRIEEITAEVEVGTVYNGKVVRIVDFGAFVTILPGKDGLVHISQIAEERVANVSDYLEVGQEVKVKVMEVDRQGRVRLSMKEAAPKADAPAAE.

Mg(2+) contacts are provided by Asp488 and Asp494. Residues 555–614 (PRITTIKINPEKIRDVIGKGGATIRALTEETGTTIELDDDGTVKIASSNGEATKEAIRRI) enclose the KH domain. The region spanning 624–692 (GTVYNGKVVR…RQGRVRLSMK (69 aa)) is the S1 motif domain.

This sequence belongs to the polyribonucleotide nucleotidyltransferase family. Component of the RNA degradosome, which is a multiprotein complex involved in RNA processing and mRNA degradation. Mg(2+) is required as a cofactor.

Its subcellular location is the cytoplasm. It catalyses the reaction RNA(n+1) + phosphate = RNA(n) + a ribonucleoside 5'-diphosphate. In terms of biological role, involved in mRNA degradation. Catalyzes the phosphorolysis of single-stranded polyribonucleotides processively in the 3'- to 5'-direction. This is Polyribonucleotide nucleotidyltransferase from Shewanella halifaxensis (strain HAW-EB4).